A 262-amino-acid polypeptide reads, in one-letter code: Transcription factor bHLH81 (262 aa).

Positions 1–29 are disordered; the sequence is MQPTSVGSSGGGDDGGGRGGGGGLSRSGL. Gly residues predominate over residues 8–25; the sequence is SSGGGDDGGGRGGGGGLS. Positions 190–240 constitute a bHLH domain; sequence CATHPRSIAERVRRTRISDRIRKLQELVPNMDKQTNTADMLEEAVEYVKVL.

As to quaternary structure, homodimer. In terms of tissue distribution, expressed in flowers.

The protein localises to the nucleus. The polypeptide is Transcription factor bHLH81 (BHLH81) (Arabidopsis thaliana (Mouse-ear cress)).